Reading from the N-terminus, the 172-residue chain is Stellate protein CG33237 (172 aa).

The protein belongs to the casein kinase 2 subunit beta family. In terms of assembly, interacts in vitro with the casein kinase 2 alpha subunit (CkII-alpha). The relevance of such interaction is however unclear in vivo. Probably not expressed in wild-type flies. In males lacking the Y chromosome, it is testis-specific and constitutes the main component of star-shaped crystals.

Its function is as follows. Unknown. In males lacking the Y chromosome, its strong overexpression leads to the appearance of proteinaceous star-shaped crystals in the primary spermatocytes causing meiotic drive, possibly by interfering with normal casein kinase 2 activity. This Drosophila melanogaster (Fruit fly) protein is Stellate protein CG33237 (Ste:CG33237).